A 293-amino-acid chain; its full sequence is Glutamyl-Q tRNA(Asp) synthetase (293 aa).

Residues 8 to 12 and Glu-44 each bind L-glutamate; that span reads RFAPT. Positions 11 to 21 match the 'HIGH' region motif; the sequence is PTPSGYLHFGS. Zn(2+) contacts are provided by Cys-100, Cys-102, Tyr-114, and Cys-118. Tyr-171 and Arg-189 together coordinate L-glutamate. Positions 227–231 match the 'KMSKS' region motif; that stretch reads KLGKS. Lys-230 is a binding site for ATP.

This sequence belongs to the class-I aminoacyl-tRNA synthetase family. GluQ subfamily. The cofactor is Zn(2+).

Functionally, catalyzes the tRNA-independent activation of glutamate in presence of ATP and the subsequent transfer of glutamate onto a tRNA(Asp). Glutamate is transferred on the 2-amino-5-(4,5-dihydroxy-2-cyclopenten-1-yl) moiety of the queuosine in the wobble position of the QUC anticodon. The protein is Glutamyl-Q tRNA(Asp) synthetase of Pseudomonas paraeruginosa (strain DSM 24068 / PA7) (Pseudomonas aeruginosa (strain PA7)).